A 414-amino-acid polypeptide reads, in one-letter code: Phosphoglycerate kinase (414 aa).

Residues 19 to 21 (DLN), arginine 34, 57 to 60 (HQSK), arginine 114, and arginine 154 contribute to the substrate site. Residues glutamate 332 and 358–361 (GGHS) contribute to the ATP site.

Belongs to the phosphoglycerate kinase family. Monomer.

Its subcellular location is the cytoplasm. It catalyses the reaction (2R)-3-phosphoglycerate + ATP = (2R)-3-phospho-glyceroyl phosphate + ADP. It participates in carbohydrate degradation; glycolysis; pyruvate from D-glyceraldehyde 3-phosphate: step 2/5. The chain is Phosphoglycerate kinase from Thermococcus onnurineus (strain NA1).